Reading from the N-terminus, the 1803-residue chain is Transposon Ty4-J Gag-Pol polyprotein (1803 aa).

Residues arginine 39–asparagine 115 are a coiled coil. The segment at asparagine 382–tyrosine 502 is ty4 protease. Aspartate 415 functions as the For protease activity; shared with dimeric partner in the catalytic mechanism. The segment at alanine 540–cysteine 600 is integrase-type zinc finger-like. In terms of domain architecture, Integrase catalytic spans threonine 620 to proline 787. Mg(2+) contacts are provided by aspartate 631 and aspartate 696. A disordered region spans residues lysine 1224 to lysine 1250. One can recognise a Reverse transcriptase Ty1/copia-type domain in the interval arginine 1376–asparagine 1511. 6 residues coordinate Mg(2+): aspartate 1384, aspartate 1463, aspartate 1464, aspartate 1645, glutamate 1687, and aspartate 1721. Positions aspartate 1645–lysine 1791 constitute an RNase H Ty1/copia-type domain.

The protease is a homodimer, whose active site consists of two apposed aspartic acid residues. Post-translationally, proteolytically processed into capsid protein (CA), Ty4 protease (PR), integrase (IN) and reverse transcriptase/ribonuclease H (RT) proteins. Initially, virus-like particles (VLPs) are composed of the structural unprocessed proteins Gag and Gag-Pol, and also contain the host initiator methionine tRNA (tRNA(i)-Met) which serves as a primer for minus-strand DNA synthesis, and a dimer of genomic Ty RNA. Processing of the polyproteins occurs within the particle and proceeds by an ordered pathway, called maturation. First, the protease (PR) is released by autocatalytic cleavage of the Gag-Pol polyprotein, and this cleavage is a prerequisite for subsequent processing at the remaining sites to release the mature structural and catalytic proteins. Maturation takes place prior to the RT reaction and is required to produce transposition-competent VLPs.

Its subcellular location is the cytoplasm. The protein localises to the nucleus. The catalysed reaction is DNA(n) + a 2'-deoxyribonucleoside 5'-triphosphate = DNA(n+1) + diphosphate. It carries out the reaction Endonucleolytic cleavage to 5'-phosphomonoester.. Capsid protein (CA) is the structural component of the virus-like particle (VLP), forming the shell that encapsulates the retrotransposons dimeric RNA genome. Its function is as follows. The aspartyl protease (PR) mediates the proteolytic cleavages of the Gag and Gag-Pol polyproteins after assembly of the VLP. Functionally, reverse transcriptase/ribonuclease H (RT) is a multifunctional enzyme that catalyzes the conversion of the retro-elements RNA genome into dsDNA within the VLP. The enzyme displays a DNA polymerase activity that can copy either DNA or RNA templates, and a ribonuclease H (RNase H) activity that cleaves the RNA strand of RNA-DNA heteroduplexes during plus-strand synthesis and hydrolyzes RNA primers. The conversion leads to a linear dsDNA copy of the retrotransposon that includes long terminal repeats (LTRs) at both ends. In terms of biological role, integrase (IN) targets the VLP to the nucleus, where a subparticle preintegration complex (PIC) containing at least integrase and the newly synthesized dsDNA copy of the retrotransposon must transit the nuclear membrane. Once in the nucleus, integrase performs the integration of the dsDNA into the host genome. This Saccharomyces cerevisiae (strain ATCC 204508 / S288c) (Baker's yeast) protein is Transposon Ty4-J Gag-Pol polyprotein (TY4B-J).